Reading from the N-terminus, the 158-residue chain is MIRIGHGFDVHALGEARPLIIGGVKVPYHTGFIAHSDGDVVLHALTDALLGAVALGDIGKLFPDTDMQFKDIDSRILLREAFRRVKEKGYAVGNVDVTIIAQAPKMRPYIDAMRAVIAEDLQCGIDQVNVKATTTEKLGFTGRSEGIATEAVVLLVKA.

Aspartate 9 and histidine 11 together coordinate a divalent metal cation. Residues 9–11 (DVH) and 35–36 (HS) contribute to the 4-CDP-2-C-methyl-D-erythritol 2-phosphate site. Histidine 43 contacts a divalent metal cation. 4-CDP-2-C-methyl-D-erythritol 2-phosphate is bound by residues 57 to 59 (DIG), 62 to 66 (FPDTD), 133 to 136 (TTTE), phenylalanine 140, and arginine 143.

The protein belongs to the IspF family. In terms of assembly, homotrimer. Requires a divalent metal cation as cofactor.

It catalyses the reaction 4-CDP-2-C-methyl-D-erythritol 2-phosphate = 2-C-methyl-D-erythritol 2,4-cyclic diphosphate + CMP. The protein operates within isoprenoid biosynthesis; isopentenyl diphosphate biosynthesis via DXP pathway; isopentenyl diphosphate from 1-deoxy-D-xylulose 5-phosphate: step 4/6. Functionally, involved in the biosynthesis of isopentenyl diphosphate (IPP) and dimethylallyl diphosphate (DMAPP), two major building blocks of isoprenoid compounds. Catalyzes the conversion of 4-diphosphocytidyl-2-C-methyl-D-erythritol 2-phosphate (CDP-ME2P) to 2-C-methyl-D-erythritol 2,4-cyclodiphosphate (ME-CPP) with a corresponding release of cytidine 5-monophosphate (CMP). The protein is 2-C-methyl-D-erythritol 2,4-cyclodiphosphate synthase of Actinobacillus succinogenes (strain ATCC 55618 / DSM 22257 / CCUG 43843 / 130Z).